The primary structure comprises 390 residues: 8-amino-7-oxononanoate synthase (390 aa).

Substrate is bound at residue arginine 19. 106–107 (GY) contributes to the pyridoxal 5'-phosphate binding site. Position 131 (histidine 131) interacts with substrate. Pyridoxal 5'-phosphate-binding residues include serine 176, histidine 204, and threonine 233. Lysine 236 carries the post-translational modification N6-(pyridoxal phosphate)lysine. Threonine 350 contacts substrate.

The protein belongs to the class-II pyridoxal-phosphate-dependent aminotransferase family. BioF subfamily. Homodimer. Pyridoxal 5'-phosphate serves as cofactor.

The enzyme catalyses 6-carboxyhexanoyl-[ACP] + L-alanine + H(+) = (8S)-8-amino-7-oxononanoate + holo-[ACP] + CO2. It participates in cofactor biosynthesis; biotin biosynthesis. Catalyzes the decarboxylative condensation of pimeloyl-[acyl-carrier protein] and L-alanine to produce 8-amino-7-oxononanoate (AON), [acyl-carrier protein], and carbon dioxide. In Pseudomonas putida (strain ATCC 47054 / DSM 6125 / CFBP 8728 / NCIMB 11950 / KT2440), this protein is 8-amino-7-oxononanoate synthase.